The chain runs to 427 residues: DNA topoisomerase 6 subunit A (427 aa).

The Topo IIA-type catalytic domain maps to 76–209; that stretch reads LSLSSVQTEI…LNVIAAEKGV (134 aa). Tyr170 serves as the catalytic O-(5'-phospho-DNA)-tyrosine intermediate. Positions 256 and 308 each coordinate Mg(2+).

The protein belongs to the TOP6A family. As to quaternary structure, homodimer. Heterotetramer of two TOP6A and two TOP6B subunits. Interacts with BIN4 and RHL1. It depends on Mg(2+) as a cofactor. Highly expressed in leaves, stems, flowers and seedlings.

It is found in the nucleus. The enzyme catalyses ATP-dependent breakage, passage and rejoining of double-stranded DNA.. Its function is as follows. Component of the DNA topoisomerase VI involved in chromatin organization and progression of endoreduplication cycles. Relaxes both positive and negative superturns and exhibits a strong decatenase activity. Involved in cell-elongation processes. This chain is DNA topoisomerase 6 subunit A, found in Arabidopsis thaliana (Mouse-ear cress).